The chain runs to 558 residues: Receptor-like kinase LIP2 (558 aa).

The segment at methionine 1 to glutamate 45 is disordered. A compositionally biased stretch (low complexity) spans serine 15–asparagine 24. Positions asparagine 25–glutamate 36 are enriched in basic and acidic residues. Threonine 53 bears the Phosphothreonine mark. The Protein kinase domain maps to phenylalanine 64–leucine 343. ATP-binding positions include leucine 70–valine 78 and lysine 93. Position 138 is a phosphotyrosine (tyrosine 138). Aspartate 191 (proton acceptor) is an active-site residue. Phosphoserine occurs at positions 195 and 227. Residue threonine 233 is modified to Phosphothreonine. At tyrosine 241 the chain carries Phosphotyrosine. A disordered region spans residues histidine 372–glutamate 558. Basic and acidic residues predominate over residues glutamate 401–glutamate 418. A compositionally biased stretch (acidic residues) spans glutamate 419 to serine 431. Over residues asparagine 432–asparagine 448 the composition is skewed to basic and acidic residues. The segment covering serine 473–serine 486 has biased composition (low complexity). Basic and acidic residues-rich tracts occupy residues tyrosine 488–glutamate 500, glutamate 508–aspartate 524, and isoleucine 547–glutamate 558.

Belongs to the protein kinase superfamily. Ser/Thr protein kinase family. Interacts with PRK6. Post-translationally, palmitoylated. In terms of tissue distribution, expressed in mature pollen and in germinating pollen tubes.

It localises to the cell membrane. Its function is as follows. Involved in pollen tube guidance into micropyle. Participates in perception of the ovule-secreted peptide signal LURE1. The protein is Receptor-like kinase LIP2 of Arabidopsis thaliana (Mouse-ear cress).